The chain runs to 274 residues: Probable S-adenosylmethionine-dependent methyltransferase MT3114 (274 aa).

The tract at residues 1 to 24 (MCAFVPHVPRHSRGDNPPSASTAS) is disordered.

Belongs to the methyltransferase superfamily.

In terms of biological role, probable S-adenosylmethionine-dependent methyltransferase required for the 6-O-methylation of the polysaccharide backbone of 6-O-methylglucosyl lipopolysaccharides (MGLP). In Mycobacterium tuberculosis (strain CDC 1551 / Oshkosh), this protein is Probable S-adenosylmethionine-dependent methyltransferase MT3114.